Here is a 468-residue protein sequence, read N- to C-terminus: Cysteine--tRNA ligase (468 aa).

Residue Cys-28 coordinates Zn(2+). A 'HIGH' region motif is present at residues 30–40 (PTVYNYIHIGN). Zn(2+) is bound by residues Cys-212, His-237, and Glu-241. The short motif at 271-275 (KMSKS) is the 'KMSKS' region element. Lys-274 is an ATP binding site.

It belongs to the class-I aminoacyl-tRNA synthetase family. Monomer. The cofactor is Zn(2+).

It localises to the cytoplasm. The enzyme catalyses tRNA(Cys) + L-cysteine + ATP = L-cysteinyl-tRNA(Cys) + AMP + diphosphate. The chain is Cysteine--tRNA ligase from Lacticaseibacillus casei (strain BL23) (Lactobacillus casei).